A 483-amino-acid polypeptide reads, in one-letter code: Glycogen synthase kinase-3 alpha (483 aa).

A compositionally biased stretch (gly residues) spans Met1–Gly15. A disordered region spans residues Met1 to Asp96. The residue at position 2 (Ser2) is an N-acetylserine. Position 2 is a phosphoserine (Ser2). Ser21 bears the Phosphoserine; by PKB/AKT1 mark. Over residues Pro25–Ala82 the composition is skewed to gly residues. Residues Ser72, Ser77, and Ser97 each carry the phosphoserine modification. In terms of domain architecture, Protein kinase spans Tyr119–Phe403. Residues Ile125–Val133 and Lys148 contribute to the ATP site. Residue Asp244 is the Proton acceptor of the active site. Tyr279 bears the Phosphotyrosine mark. The interval Ala449–Ser483 is disordered.

This sequence belongs to the protein kinase superfamily. CMGC Ser/Thr protein kinase family. GSK-3 subfamily. As to quaternary structure, monomer. Interacts with ARRB2. Interacts with AXIN1 and CTNNB1/beta-catenin. Interacts with CTNND2. Interacts with LMBR1L. Interacts with DDX3X. Interacts with TNFRSF10B. Interacts with RICTOR; the interaction results in phosphorylation of RICTOR at 'Thr-1695' by GSK3A which facilitates FBXW7-mediated ubiquitination and subsequent degradation of RICTOR. (Microbial infection) Interacts with M.tuberculosis PtpA. In terms of processing, phosphorylated by AKT1 at Ser-21: upon insulin-mediated signaling, the activated PKB/AKT1 protein kinase phosphorylates and deactivates GSK3A, resulting in the dephosphorylation and activation of GYS1. Activated by phosphorylation at Tyr-279. Post-translationally, (Microbial infection) Dephosphorylated at Tyr-279 by M.tuberculosis PtpA, which leads to prevention of apoptosis during early stages of microbial infection.

It catalyses the reaction L-seryl-[tau protein] + ATP = O-phospho-L-seryl-[tau protein] + ADP + H(+). The enzyme catalyses L-threonyl-[tau protein] + ATP = O-phospho-L-threonyl-[tau protein] + ADP + H(+). It carries out the reaction L-seryl-[protein] + ATP = O-phospho-L-seryl-[protein] + ADP + H(+). The catalysed reaction is L-threonyl-[protein] + ATP = O-phospho-L-threonyl-[protein] + ADP + H(+). With respect to regulation, activated by phosphorylation at Tyr-279. In response to insulin, inhibited by phosphorylation at Ser-21 by PKB/AKT1; phosphorylation at this site causes a conformational change, preventing access of substrates to the active site. Inhibited by lithium. Functionally, constitutively active protein kinase that acts as a negative regulator in the hormonal control of glucose homeostasis, Wnt signaling and regulation of transcription factors and microtubules, by phosphorylating and inactivating glycogen synthase (GYS1 or GYS2), CTNNB1/beta-catenin, APC and AXIN1. Requires primed phosphorylation of the majority of its substrates. Contributes to insulin regulation of glycogen synthesis by phosphorylating and inhibiting GYS1 activity and hence glycogen synthesis. Regulates glycogen metabolism in liver, but not in muscle. May also mediate the development of insulin resistance by regulating activation of transcription factors. In Wnt signaling, regulates the level and transcriptional activity of nuclear CTNNB1/beta-catenin. Facilitates amyloid precursor protein (APP) processing and the generation of APP-derived amyloid plaques found in Alzheimer disease. May be involved in the regulation of replication in pancreatic beta-cells. Is necessary for the establishment of neuronal polarity and axon outgrowth. Through phosphorylation of the anti-apoptotic protein MCL1, may control cell apoptosis in response to growth factors deprivation. Acts as a regulator of autophagy by mediating phosphorylation of KAT5/TIP60 under starvation conditions which activates KAT5/TIP60 acetyltransferase activity and promotes acetylation of key autophagy regulators, such as ULK1 and RUBCNL/Pacer. Negatively regulates extrinsic apoptotic signaling pathway via death domain receptors. Promotes the formation of an anti-apoptotic complex, made of DDX3X, BRIC2 and GSK3B, at death receptors, including TNFRSF10B. The anti-apoptotic function is most effective with weak apoptotic signals and can be overcome by stronger stimulation. Phosphorylates mTORC2 complex component RICTOR at 'Thr-1695' which facilitates FBXW7-mediated ubiquitination and subsequent degradation of RICTOR. The sequence is that of Glycogen synthase kinase-3 alpha (GSK3A) from Homo sapiens (Human).